The sequence spans 235 residues: H2HPP isomerase (235 aa).

2 consecutive Cupin type-2 domains span residues 41 to 106 (VPPH…AIDI) and 151 to 216 (KIPG…KSIN). The a divalent metal cation site is built by His-50, His-52, Gln-56, His-91, His-162, His-164, Gln-168, and His-202. Tyr-223 serves as a coordination point for substrate.

In terms of assembly, monomer. Fe(2+) serves as cofactor. The cofactor is Co(2+).

The protein localises to the cytoplasm. It carries out the reaction 3-[(4R)-4-hydroxycyclohexa-1,5-dien-1-yl]-2-oxopropanoate = 3-[(1E,4R)-4-hydroxycyclohex-2-en-1-ylidene]pyruvate. It participates in antibiotic biosynthesis; bacilysin biosynthesis. Functionally, part of the bacABCDEF operon responsible for the biosynthesis of the nonribosomally synthesized dipeptide antibiotic bacilysin, composed of L-alanine and L-anticapsin. Bacilysin is an irreversible inactivator of the glutaminase domain of glucosamine synthetase. BacB catalyzes the allylic isomerization of the endocyclic-delta(4),delta(8)-7R-dihydro-hydroxyphenylpyruvate (en-H2HPP) to generate a mixture of 3E,7R- and 3Z, 7R-olefins (E/Z ration of 3/1) of the exocyclic-delta(3),delta(5)-dihydro-hydroxyphenylpyruvate (ex-H2HPP). This is H2HPP isomerase from Bacillus subtilis (strain 168).